Here is a 689-residue protein sequence, read N- to C-terminus: Glycine--tRNA ligase beta subunit (689 aa).

It belongs to the class-II aminoacyl-tRNA synthetase family. In terms of assembly, tetramer of two alpha and two beta subunits.

Its subcellular location is the cytoplasm. The catalysed reaction is tRNA(Gly) + glycine + ATP = glycyl-tRNA(Gly) + AMP + diphosphate. This is Glycine--tRNA ligase beta subunit from Enterobacter sp. (strain 638).